Here is a 58-residue protein sequence, read N- to C-terminus: uncharacterized protein (58 aa).

The chain crosses the membrane as a helical span at residues 24–44; that stretch reads LSVYLGLATTIVCIVLFFTML.

It is found in the membrane. This is an uncharacterized protein from Haemophilus influenzae (strain ATCC 51907 / DSM 11121 / KW20 / Rd).